Reading from the N-terminus, the 398-residue chain is 2,3,4,5-tetrahydropyridine-2,6-dicarboxylate N-succinyltransferase (398 aa).

Glu268 (acyl-anhydride intermediate) is an active-site residue. Succinyl-CoA-binding positions include Arg270, Gly285, Ser288, Ala311, 326 to 327, Gly334, Lys361, and 374 to 377; these read DG and RQNS.

This sequence belongs to the type 2 tetrahydrodipicolinate N-succinyltransferase family. In terms of assembly, homotrimer.

Its subcellular location is the cytoplasm. The enzyme catalyses (S)-2,3,4,5-tetrahydrodipicolinate + succinyl-CoA + H2O = (S)-2-succinylamino-6-oxoheptanedioate + CoA. It functions in the pathway amino-acid biosynthesis; L-lysine biosynthesis via DAP pathway; LL-2,6-diaminopimelate from (S)-tetrahydrodipicolinate (succinylase route): step 1/3. Catalyzes the conversion of the cyclic tetrahydrodipicolinate (THDP) into the acyclic N-succinyl-L-2-amino-6-oxopimelate using succinyl-CoA. The chain is 2,3,4,5-tetrahydropyridine-2,6-dicarboxylate N-succinyltransferase from Sulfurimonas denitrificans (strain ATCC 33889 / DSM 1251) (Thiomicrospira denitrificans (strain ATCC 33889 / DSM 1251)).